We begin with the raw amino-acid sequence, 571 residues long: MGNSPSYNPPAGISPSDWLNLLQSAQRLNPRPSPSDFTDLKNYIHWFHKTQKKPWTFTSGGPASCPPGKFGRVPLVLATLNEVLSNDEGAPGASAPEEQPPPYDPPAVLPIISEGNRNRHRAWALRELQDIKKEIENKAPGSQVWIQTLRLAILQADPTPADLEQLCQYIASPVDQTAHMTSLTAAIAAEAANTLQGFNPKMGTLTQQSAQPNAGDLRSQYQNLWLQAWKNLPTRPSVQPWSTIVQGPAESYVEFVNRLQISLADNLPDGVPKEPIIDSLSYANANKECQQILQGRGLVAAPVGQKLQACAHWAPKTKQPAILVHTPGPKMPGPRQPAPKRPPPGPCYRCLKEGHWARDCPTKTTGPPPGPCPICKDPSHWKRDCPTLKSKKLIEGGPSAPQIITPITDSLSEAELECLLSIPLARSRPSVAVYLSGPWLQPSQNQALMLVDTGAENTVLPQNWLVRDYPRTPAAVLGAGGISRNRYNWLQGPLTLALKPEGPFITIPKILVDTFDKWQILGRDVLSRLQASISIPEEVHPPVVGVLDAPPSHIGLEHLPPPPEVPQFPLN.

Gly2 carries N-myristoyl glycine; by host lipidation. A PPXY motif motif is present at residues 100–103; that stretch reads PPPY. 2 consecutive repeats follow at residues 342–362 and 367–387; these read PPPGPCYRCLKEGHWARDCPT and PPPGPCPICKDPSHWKRDCPT. 2 CCHC-type zinc fingers span residues 345–362 and 370–387; these read GPCYRCLKEGHWARDCPT and GPCPICKDPSHWKRDCPT. One can recognise a Peptidase A2 domain in the interval 447–525; the sequence is ALMLVDTGAE…DKWQILGRDV (79 aa). Catalysis depends on Asp452, which acts as the Protease; shared with dimeric partner.

Homodimer; the homodimers are part of the immature particles. Interacts with human TSG101 and NEDD4; these interactions are essential for budding and release of viral particles. As to quaternary structure, homodimer; further assembles as homohexamers. Specific enzymatic cleavages by the viral protease yield mature proteins. The polyprotein is cleaved during and after budding, this process is termed maturation. The protease is autoproteolytically processed at its N- and C-termini. Post-translationally, gag polyprotein: Myristoylated. Myristoylation of the matrix (MA) domain mediates the transport and binding of Gag polyproteins to the host plasma membrane and is required for the assembly of viral particles.

The protein localises to the virion. Functionally, the matrix domain targets Gag, Gag-Pro and Gag-Pro-Pol polyproteins to the plasma membrane via a multipartite membrane binding signal, that includes its myristoylated N-terminus. Its function is as follows. Matrix protein. In terms of biological role, forms the spherical core of the virus that encapsulates the genomic RNA-nucleocapsid complex. Binds strongly to viral nucleic acids and promote their aggregation. Also destabilizes the nucleic acids duplexes via highly structured zinc-binding motifs. Functionally, the aspartyl protease mediates proteolytic cleavages of Gag and Gag-Pol polyproteins during or shortly after the release of the virion from the plasma membrane. Cleavages take place as an ordered, step-wise cascade to yield mature proteins. This process is called maturation. Displays maximal activity during the budding process just prior to particle release from the cell. The protein is Gag-Pro polyprotein of Bos taurus (Bovine).